Consider the following 434-residue polypeptide: Methylenetetrahydrofolate--tRNA-(uracil-5-)-methyltransferase TrmFO (434 aa).

9-14 (GAGLAG) contacts FAD.

The protein belongs to the MnmG family. TrmFO subfamily. The cofactor is FAD.

It localises to the cytoplasm. The enzyme catalyses uridine(54) in tRNA + (6R)-5,10-methylene-5,6,7,8-tetrahydrofolate + NADH + H(+) = 5-methyluridine(54) in tRNA + (6S)-5,6,7,8-tetrahydrofolate + NAD(+). The catalysed reaction is uridine(54) in tRNA + (6R)-5,10-methylene-5,6,7,8-tetrahydrofolate + NADPH + H(+) = 5-methyluridine(54) in tRNA + (6S)-5,6,7,8-tetrahydrofolate + NADP(+). Functionally, catalyzes the folate-dependent formation of 5-methyl-uridine at position 54 (M-5-U54) in all tRNAs. The polypeptide is Methylenetetrahydrofolate--tRNA-(uracil-5-)-methyltransferase TrmFO (Fusobacterium nucleatum subsp. nucleatum (strain ATCC 25586 / DSM 15643 / BCRC 10681 / CIP 101130 / JCM 8532 / KCTC 2640 / LMG 13131 / VPI 4355)).